An 840-amino-acid polypeptide reads, in one-letter code: Heat shock 70 kDa protein 4 (840 aa).

Residue lysine 53 is modified to N6-acetyllysine. Serine 76 carries the phosphoserine modification. Phosphotyrosine occurs at positions 89 and 336. Serine 393 and serine 415 each carry phosphoserine. The residue at position 430 (lysine 430) is an N6-acetyllysine. The tract at residues 506–575 (NEEPMETDQN…QAKKAKVKTS (70 aa)) is disordered. Basic and acidic residues predominate over residues 514-533 (QNAKEEEKMQVDQEEPHAEE). A Phosphothreonine modification is found at threonine 538. Phosphoserine occurs at positions 546 and 647. Tyrosine 660 is modified (phosphotyrosine). Lysine 679 carries the post-translational modification N6-acetyllysine. Serine 756 carries the post-translational modification Phosphoserine. Lysine 773 carries the post-translational modification N6-methyllysine. Residues 782 to 840 (IISKPKPKVEPPKEEQKNAEQNGPVDGQGDSPGPQAAEQGTDTAVPSDSDKKLPEMDID) form a disordered region. 2 stretches are compositionally biased toward basic and acidic residues: residues 788-799 (PKVEPPKEEQKN) and 829-840 (DSDKKLPEMDID).

This sequence belongs to the heat shock protein 70 family. Interacts with TJP1/ZO-1.

The protein localises to the cytoplasm. The polypeptide is Heat shock 70 kDa protein 4 (HSPA4) (Canis lupus familiaris (Dog)).